Consider the following 166-residue polypeptide: Glutamyl-tRNA(Gln) amidotransferase subunit C, mitochondrial (166 aa).

Residues 1–44 (MIRGWTIFTLCKPSALVGSSHFNKQFNWAKSQLQFATKVPQQPY) constitute a mitochondrion transit peptide.

It belongs to the GatC family. Subunit of the heterotrimeric GatCAB amidotransferase (AdT) complex, composed of A, B and C subunits.

The protein localises to the mitochondrion. The catalysed reaction is L-glutamyl-tRNA(Gln) + L-glutamine + ATP + H2O = L-glutaminyl-tRNA(Gln) + L-glutamate + ADP + phosphate + H(+). Its function is as follows. Allows the formation of correctly charged Gln-tRNA(Gln) through the transamidation of misacylated Glu-tRNA(Gln) in the mitochondria. The reaction takes place in the presence of glutamine and ATP through an activated gamma-phospho-Glu-tRNA(Gln). This is Glutamyl-tRNA(Gln) amidotransferase subunit C, mitochondrial from Anopheles darlingi (Mosquito).